Here is a 516-residue protein sequence, read N- to C-terminus: Exodeoxyribonuclease 7 large subunit (516 aa).

It belongs to the XseA family. As to quaternary structure, heterooligomer composed of large and small subunits.

It is found in the cytoplasm. It carries out the reaction Exonucleolytic cleavage in either 5'- to 3'- or 3'- to 5'-direction to yield nucleoside 5'-phosphates.. Functionally, bidirectionally degrades single-stranded DNA into large acid-insoluble oligonucleotides, which are then degraded further into small acid-soluble oligonucleotides. The polypeptide is Exodeoxyribonuclease 7 large subunit (Chlamydia trachomatis serovar A (strain ATCC VR-571B / DSM 19440 / HAR-13)).